The following is a 621-amino-acid chain: ATP-dependent lipid A-core flippase (621 aa).

5 helical membrane passes run Ile32 to Phe52, Val91 to Ile111, Ile192 to Leu212, Ser286 to Trp306, and Tyr312 to Ile332. The region spanning Val33 to Thr344 is the ABC transmembrane type-1 domain. An ABC transporter domain is found at Phe378–Ile611. Gly410–Ser417 is an ATP binding site.

This sequence belongs to the ABC transporter superfamily. Lipid exporter (TC 3.A.1.106) family. Homodimer.

The protein localises to the cell inner membrane. It carries out the reaction ATP + H2O + lipid A-core oligosaccharideSide 1 = ADP + phosphate + lipid A-core oligosaccharideSide 2.. Functionally, involved in lipopolysaccharide (LPS) biosynthesis. Translocates lipid A-core from the inner to the outer leaflet of the inner membrane. Transmembrane domains (TMD) form a pore in the inner membrane and the ATP-binding domain (NBD) is responsible for energy generation. The protein is ATP-dependent lipid A-core flippase of Neisseria meningitidis serogroup B (strain ATCC BAA-335 / MC58).